Consider the following 218-residue polypeptide: Guanylate kinase (218 aa).

Residues 10–190 (GLLIILSSPS…TEERLKTIIT (181 aa)) enclose the Guanylate kinase-like domain. 17-24 (SPSGAGKS) contributes to the ATP binding site.

This sequence belongs to the guanylate kinase family.

The protein resides in the cytoplasm. The catalysed reaction is GMP + ATP = GDP + ADP. Functionally, essential for recycling GMP and indirectly, cGMP. The polypeptide is Guanylate kinase (Jannaschia sp. (strain CCS1)).